The following is a 142-amino-acid chain: MLRRDAWRQARFVHPRSYREKILRSLFFALTARINQMRRLDPEEYPEDPIEGYDRFLEIVREYAEDPDYDSPLLLLYESLSAAYAIFLRGEPVHPPGTEFPGVGKVRRTDDCYYCPIKERREDQPGSFCTLCPAEQDPEVVS.

It belongs to the UPF0305 family.

The polypeptide is UPF0305 protein MK0666 (Methanopyrus kandleri (strain AV19 / DSM 6324 / JCM 9639 / NBRC 100938)).